A 295-amino-acid chain; its full sequence is Pyridoxal 5'-phosphate synthase subunit PdxS (295 aa).

Residue Asp25 coordinates D-ribose 5-phosphate. The active-site Schiff-base intermediate with D-ribose 5-phosphate is the Lys82. Gly154 contributes to the D-ribose 5-phosphate binding site. Position 166 (Arg166) interacts with D-glyceraldehyde 3-phosphate. D-ribose 5-phosphate is bound by residues Gly215 and 236-237; that span reads GS.

It belongs to the PdxS/SNZ family. As to quaternary structure, in the presence of PdxT, forms a dodecamer of heterodimers.

The catalysed reaction is aldehydo-D-ribose 5-phosphate + D-glyceraldehyde 3-phosphate + L-glutamine = pyridoxal 5'-phosphate + L-glutamate + phosphate + 3 H2O + H(+). It participates in cofactor biosynthesis; pyridoxal 5'-phosphate biosynthesis. Its function is as follows. Catalyzes the formation of pyridoxal 5'-phosphate from ribose 5-phosphate (RBP), glyceraldehyde 3-phosphate (G3P) and ammonia. The ammonia is provided by the PdxT subunit. Can also use ribulose 5-phosphate and dihydroxyacetone phosphate as substrates, resulting from enzyme-catalyzed isomerization of RBP and G3P, respectively. The protein is Pyridoxal 5'-phosphate synthase subunit PdxS of Actinobacillus pleuropneumoniae serotype 3 (strain JL03).